Reading from the N-terminus, the 376-residue chain is Probable transcription factor At1g61730 (376 aa).

Residues 1–150 are disordered; sequence MTKKLNPLED…RVKKDEESVK (150 aa). Residues 17 to 40 show a composition bias toward acidic residues; it reads SDEDDVETSEAGEASDDSSSSEED. S49 carries the phosphoserine modification. Over residues 49-72 the composition is skewed to low complexity; it reads SPSATTAAAPPAKSTAVSTAADSD. Residues 73–83 are compositionally biased toward acidic residues; it reads SGSETETDSDS. A compositionally biased stretch (polar residues) spans 87–103; the sequence is NPPNSGSGKTIALNTVN.

It belongs to the GeBP family. In terms of assembly, interacts with DEK3.

The polypeptide is Probable transcription factor At1g61730 (Arabidopsis thaliana (Mouse-ear cress)).